Reading from the N-terminus, the 107-residue chain is Translation initiation factor IF-1, chloroplastic (107 aa).

Residues 8-83 (REKKNPREAK…SKGRIIYRLP (76 aa)) enclose the S1-like domain. Residues 81–107 (RLPHKDSKRTEDSKDTEDLKDTKDSKD) form a disordered region. Over residues 83–107 (PHKDSKRTEDSKDTEDLKDTKDSKD) the composition is skewed to basic and acidic residues.

It belongs to the IF-1 family. As to quaternary structure, component of the 30S ribosomal translation pre-initiation complex which assembles on the 30S ribosome in the order IF-2 and IF-3, IF-1 and N-formylmethionyl-tRNA(fMet); mRNA recruitment can occur at any time during PIC assembly.

The protein resides in the plastid. Its subcellular location is the chloroplast. One of the essential components for the initiation of protein synthesis. Stabilizes the binding of IF-2 and IF-3 on the 30S subunit to which N-formylmethionyl-tRNA(fMet) subsequently binds. Helps modulate mRNA selection, yielding the 30S pre-initiation complex (PIC). Upon addition of the 50S ribosomal subunit IF-1, IF-2 and IF-3 are released leaving the mature 70S translation initiation complex. This is Translation initiation factor IF-1, chloroplastic from Saccharum hybrid (Sugarcane).